The chain runs to 198 residues: Ribosome maturation factor RimP (198 aa).

This sequence belongs to the RimP family.

The protein resides in the cytoplasm. Its function is as follows. Required for maturation of 30S ribosomal subunits. The polypeptide is Ribosome maturation factor RimP (Rhizobium etli (strain ATCC 51251 / DSM 11541 / JCM 21823 / NBRC 15573 / CFN 42)).